Here is a 176-residue protein sequence, read N- to C-terminus: ATP-dependent protease subunit HslV (176 aa).

Residue threonine 4 is part of the active site. The Na(+) site is built by alanine 159, cysteine 162, and threonine 165.

This sequence belongs to the peptidase T1B family. HslV subfamily. A double ring-shaped homohexamer of HslV is capped on each side by a ring-shaped HslU homohexamer. The assembly of the HslU/HslV complex is dependent on binding of ATP.

It is found in the cytoplasm. The enzyme catalyses ATP-dependent cleavage of peptide bonds with broad specificity.. Its activity is regulated as follows. Allosterically activated by HslU binding. Its function is as follows. Protease subunit of a proteasome-like degradation complex believed to be a general protein degrading machinery. The polypeptide is ATP-dependent protease subunit HslV (Wolbachia sp. subsp. Brugia malayi (strain TRS)).